The sequence spans 494 residues: Guanosine-5'-triphosphate,3'-diphosphate pyrophosphatase (494 aa).

It belongs to the GppA/Ppx family. GppA subfamily.

The enzyme catalyses guanosine 3'-diphosphate 5'-triphosphate + H2O = guanosine 3',5'-bis(diphosphate) + phosphate + H(+). It participates in purine metabolism; ppGpp biosynthesis; ppGpp from GTP: step 2/2. Functionally, catalyzes the conversion of pppGpp to ppGpp. Guanosine pentaphosphate (pppGpp) is a cytoplasmic signaling molecule which together with ppGpp controls the 'stringent response', an adaptive process that allows bacteria to respond to amino acid starvation, resulting in the coordinated regulation of numerous cellular activities. This is Guanosine-5'-triphosphate,3'-diphosphate pyrophosphatase from Citrobacter koseri (strain ATCC BAA-895 / CDC 4225-83 / SGSC4696).